Consider the following 329-residue polypeptide: Biotin--protein ligase 2 (329 aa).

Residues I67–M251 form the BPL/LPL catalytic domain. Biotin contacts are provided by residues S84–T85, Q107, R111–R113, and K182.

The protein belongs to the biotin--protein ligase family. Highly expressed in seeds. Expressed in roots, leaves, stems, flowers and siliques.

Its subcellular location is the cytoplasm. In terms of biological role, seems to have no or limited implication in biotin-dependent carboxylase biotinylation in planta. The polypeptide is Biotin--protein ligase 2 (HCS2) (Arabidopsis thaliana (Mouse-ear cress)).